Reading from the N-terminus, the 222-residue chain is Peptide methionine sulfoxide reductase MsrA (222 aa).

Cys-60 is a catalytic residue.

This sequence belongs to the MsrA Met sulfoxide reductase family.

The enzyme catalyses L-methionyl-[protein] + [thioredoxin]-disulfide + H2O = L-methionyl-(S)-S-oxide-[protein] + [thioredoxin]-dithiol. The catalysed reaction is [thioredoxin]-disulfide + L-methionine + H2O = L-methionine (S)-S-oxide + [thioredoxin]-dithiol. Its function is as follows. Has an important function as a repair enzyme for proteins that have been inactivated by oxidation. Catalyzes the reversible oxidation-reduction of methionine sulfoxide in proteins to methionine. The protein is Peptide methionine sulfoxide reductase MsrA of Pseudomonas putida (strain ATCC 47054 / DSM 6125 / CFBP 8728 / NCIMB 11950 / KT2440).